Reading from the N-terminus, the 122-residue chain is Basic phospholipase A2 (122 aa).

Disulfide bonds link Cys-26–Cys-115, Cys-28–Cys-44, Cys-43–Cys-95, Cys-49–Cys-122, Cys-50–Cys-88, Cys-57–Cys-81, and Cys-75–Cys-86. Residues Tyr-27, Gly-29, and Gly-31 each contribute to the Ca(2+) site. His-47 is a catalytic residue. Asp-48 contacts Ca(2+). The active site involves Asp-89.

Belongs to the phospholipase A2 family. Group II subfamily. D49 sub-subfamily. As to quaternary structure, homodimer. Ca(2+) is required as a cofactor. Expressed by the venom gland.

The protein localises to the secreted. It carries out the reaction a 1,2-diacyl-sn-glycero-3-phosphocholine + H2O = a 1-acyl-sn-glycero-3-phosphocholine + a fatty acid + H(+). Snake venom phospholipase A2 (PLA2) that inhibits neuromuscular transmission by blocking acetylcholine release from the nerve termini. PLA2 catalyzes the calcium-dependent hydrolysis of the 2-acyl groups in 3-sn-phosphoglycerides. In Gloydius blomhoffii (Mamushi), this protein is Basic phospholipase A2.